The primary structure comprises 180 residues: Prothoracicotropic hormone (180 aa).

The N-terminal stretch at 1–15 (MKLLILCVMVHGLLA) is a signal peptide. The propeptide occupies 16-64 (EGPGQVLWKEQVVAPEFLLDDREDIASNRNAFFYEDKRSFRPEGLGEQV). 2 cysteine pairs are disulfide-bonded: C88–C123 and C111–C175.

In terms of assembly, homodimer; disulfide-linked.

It localises to the secreted. Functionally, PTTH is a brain secretory polypeptide of insects which stimulates the prothoracic glands to produce and release ecdysone, the steroid essential to insect development. The protein is Prothoracicotropic hormone of Camponotus floridanus (Florida carpenter ant).